Consider the following 144-residue polypeptide: Large ribosomal subunit protein uL15 (144 aa).

Positions 1 to 49 (MRLNTLSPAAGAKSAAKRVGRGIGSGLGKTAGRGHKGQKSRSGGGVRVG) are disordered. A compositionally biased stretch (gly residues) spans 21–31 (RGIGSGLGKTA).

Belongs to the universal ribosomal protein uL15 family. Part of the 50S ribosomal subunit.

Binds to the 23S rRNA. The chain is Large ribosomal subunit protein uL15 from Shewanella piezotolerans (strain WP3 / JCM 13877).